A 283-amino-acid polypeptide reads, in one-letter code: Protein/nucleic acid deglycase HchA (283 aa).

3 residues coordinate Zn(2+): His-86, Glu-91, and His-123. Cys-185 acts as the Nucleophile in catalysis.

The protein belongs to the peptidase C56 family. HchA subfamily. In terms of assembly, homodimer.

The protein resides in the cytoplasm. The enzyme catalyses N(omega)-(1-hydroxy-2-oxopropyl)-L-arginyl-[protein] + H2O = lactate + L-arginyl-[protein] + H(+). The catalysed reaction is N(6)-(1-hydroxy-2-oxopropyl)-L-lysyl-[protein] + H2O = lactate + L-lysyl-[protein] + H(+). It carries out the reaction S-(1-hydroxy-2-oxopropyl)-L-cysteinyl-[protein] + H2O = lactate + L-cysteinyl-[protein] + H(+). It catalyses the reaction N(omega)-(1-hydroxy-2-oxoethyl)-L-arginyl-[protein] + H2O = L-arginyl-[protein] + glycolate + H(+). The enzyme catalyses N(6)-(1-hydroxy-2-oxoethyl)-L-lysyl-[protein] + H2O = glycolate + L-lysyl-[protein] + H(+). The catalysed reaction is S-(1-hydroxy-2-oxoethyl)-L-cysteinyl-[protein] + H2O = glycolate + L-cysteinyl-[protein] + H(+). It carries out the reaction N(2)-(1-hydroxy-2-oxopropyl)-dGTP + H2O = lactate + dGTP + H(+). It catalyses the reaction N(2)-(1-hydroxy-2-oxopropyl)-GTP + H2O = lactate + GTP + H(+). The enzyme catalyses N(2)-(1-hydroxy-2-oxopropyl)-GDP + H2O = lactate + GDP + H(+). The catalysed reaction is N(2)-(1-hydroxy-2-oxopropyl)-GMP + H2O = lactate + GMP + H(+). It carries out the reaction N(2)-(1-hydroxy-2-oxoethyl)-dGTP + H2O = dGTP + glycolate + H(+). It catalyses the reaction N(2)-(1-hydroxy-2-oxoethyl)-GTP + H2O = glycolate + GTP + H(+). The enzyme catalyses N(2)-(1-hydroxy-2-oxoethyl)-GDP + H2O = glycolate + GDP + H(+). The catalysed reaction is N(2)-(1-hydroxy-2-oxoethyl)-GMP + H2O = glycolate + GMP + H(+). It carries out the reaction an N(2)-(1-hydroxy-2-oxopropyl)-guanosine in RNA + H2O = a guanosine in RNA + lactate + H(+). It catalyses the reaction an N(2)-(1-hydroxy-2-oxopropyl)-2'-deoxyguanosine in DNA + H2O = a 2'-deoxyguanosine in DNA + lactate + H(+). The enzyme catalyses an N(2)-(1-hydroxy-2-oxoethyl)-guanosine in RNA + H2O = a guanosine in RNA + glycolate + H(+). The catalysed reaction is an N(2)-(1-hydroxy-2-oxoethyl)-2'-deoxyguanosine in DNA + H2O = a 2'-deoxyguanosine in DNA + glycolate + H(+). In terms of biological role, protein and nucleotide deglycase that catalyzes the deglycation of the Maillard adducts formed between amino groups of proteins or nucleotides and reactive carbonyl groups of glyoxals. Thus, functions as a protein deglycase that repairs methylglyoxal- and glyoxal-glycated proteins, and releases repaired proteins and lactate or glycolate, respectively. Deglycates cysteine, arginine and lysine residues in proteins, and thus reactivates these proteins by reversing glycation by glyoxals. Acts on early glycation intermediates (hemithioacetals and aminocarbinols), preventing the formation of Schiff bases and advanced glycation endproducts (AGE). Also functions as a nucleotide deglycase able to repair glycated guanine in the free nucleotide pool (GTP, GDP, GMP, dGTP) and in DNA and RNA. Is thus involved in a major nucleotide repair system named guanine glycation repair (GG repair), dedicated to reversing methylglyoxal and glyoxal damage via nucleotide sanitization and direct nucleic acid repair. Plays an important role in protecting cells from carbonyl stress. The protein is Protein/nucleic acid deglycase HchA of Escherichia coli O7:K1 (strain IAI39 / ExPEC).